A 258-amino-acid chain; its full sequence is Small ribosomal subunit protein mS35 (258 aa).

Residues 1–39 (MAFNPLLSLLKADAIFLGQLSKSSFCATSRAFSVFYFTR) constitute a mitochondrion transit peptide.

Belongs to the mitochondrion-specific ribosomal protein mS35 family. In terms of assembly, component of the mitochondrial small ribosomal subunit (mt-SSU). Mature yeast 74S mitochondrial ribosomes consist of a small (37S) and a large (54S) subunit. The 37S small subunit contains a 15S ribosomal RNA (15S mt-rRNA) and at least 32 different proteins. The 54S large subunit contains a 21S rRNA (21S mt-rRNA) and at least 45 different proteins.

It is found in the mitochondrion. Component of the mitochondrial ribosome (mitoribosome), a dedicated translation machinery responsible for the synthesis of mitochondrial genome-encoded proteins, including at least some of the essential transmembrane subunits of the mitochondrial respiratory chain. The mitoribosomes are attached to the mitochondrial inner membrane and translation products are cotranslationally integrated into the membrane. The chain is Small ribosomal subunit protein mS35 (rsm24) from Schizosaccharomyces pombe (strain 972 / ATCC 24843) (Fission yeast).